Here is a 158-residue protein sequence, read N- to C-terminus: Anaerobic nitrite reductase AHB2 (158 aa).

A Globin domain is found at 5-154 (GFTEKQEALV…LALAIKTEMK (150 aa)). The short motif at 38 to 42 (EIAPA) is the Homodimerization element. Heme b-binding residues include S48, K62, H66, and H101. The Homodimerization signature appears at 108-120 (DPHFEVVKEALLR).

Belongs to the plant globin family. In terms of assembly, unable to dimerize. Requires heme b as cofactor. In terms of tissue distribution, expressed in rosette leaves but not in roots.

The protein localises to the cytoplasm. The protein resides in the nucleus. The catalysed reaction is Fe(III)-heme b-[protein] + nitric oxide + H2O = Fe(II)-heme b-[protein] + nitrite + 2 H(+). Its function is as follows. Phytoglobin that reduces nitrite to nitric oxide (NO) under anoxic conditions (e.g. during flooding or in waterlogged soil). May not function as an oxygen storage or transport protein. Has an unusually high affinity for O(2) through an hexacoordinate heme iron because of a very low dissociation constant. The protein is Anaerobic nitrite reductase AHB2 of Arabidopsis thaliana (Mouse-ear cress).